The sequence spans 145 residues: D-aminoacyl-tRNA deacylase (145 aa).

Residues 137–138 (GP) carry the Gly-cisPro motif, important for rejection of L-amino acids motif.

This sequence belongs to the DTD family. As to quaternary structure, homodimer.

Its subcellular location is the cytoplasm. It catalyses the reaction glycyl-tRNA(Ala) + H2O = tRNA(Ala) + glycine + H(+). The enzyme catalyses a D-aminoacyl-tRNA + H2O = a tRNA + a D-alpha-amino acid + H(+). Its function is as follows. An aminoacyl-tRNA editing enzyme that deacylates mischarged D-aminoacyl-tRNAs. Also deacylates mischarged glycyl-tRNA(Ala), protecting cells against glycine mischarging by AlaRS. Acts via tRNA-based rather than protein-based catalysis; rejects L-amino acids rather than detecting D-amino acids in the active site. By recycling D-aminoacyl-tRNA to D-amino acids and free tRNA molecules, this enzyme counteracts the toxicity associated with the formation of D-aminoacyl-tRNA entities in vivo and helps enforce protein L-homochirality. The protein is D-aminoacyl-tRNA deacylase of Shewanella baltica (strain OS195).